Here is a 362-residue protein sequence, read N- to C-terminus: 3-dehydroquinate synthase (362 aa).

Residues 71–76 (DGEQYK), 105–109 (GVIGD), 129–130 (TT), Lys-142, Lys-151, and 169–172 (CLQT) contribute to the NAD(+) site. Zn(2+) is bound by residues Glu-184, His-247, and His-264.

Belongs to the sugar phosphate cyclases superfamily. Dehydroquinate synthase family. Co(2+) serves as cofactor. It depends on Zn(2+) as a cofactor. Requires NAD(+) as cofactor.

It localises to the cytoplasm. It carries out the reaction 7-phospho-2-dehydro-3-deoxy-D-arabino-heptonate = 3-dehydroquinate + phosphate. Its pathway is metabolic intermediate biosynthesis; chorismate biosynthesis; chorismate from D-erythrose 4-phosphate and phosphoenolpyruvate: step 2/7. In terms of biological role, catalyzes the conversion of 3-deoxy-D-arabino-heptulosonate 7-phosphate (DAHP) to dehydroquinate (DHQ). The sequence is that of 3-dehydroquinate synthase from Cronobacter sakazakii (strain ATCC BAA-894) (Enterobacter sakazakii).